Reading from the N-terminus, the 86-residue chain is Mu-theraphotoxin-Cg2a 3 (86 aa).

Positions 1–21 (MKVSVVITLAVLGVMFVWASA) are cleaved as a signal peptide. A propeptide spanning residues 22 to 50 (AELKERGSDQRDSPAWIKSMERIFQSEER) is cleaved from the precursor. 3 disulfides stabilise this stretch: Cys52-Cys66, Cys59-Cys71, and Cys65-Cys78. Phenylalanine amide is present on Phe84.

Belongs to the neurotoxin 10 (Hwtx-1) family. 37 (Jztx-31) subfamily. In terms of tissue distribution, expressed by the venom gland.

The protein localises to the secreted. In terms of biological role, inhibits both peak current and fast inactivation of voltage-gated sodium channels (Nav) channels. Inhibits the inactivation of Nav on DRG neurons (EC(50)=1.77 uM) and peak current of cardiac myocytes (IC(50)=0.90 uM). This chain is Mu-theraphotoxin-Cg2a 3, found in Chilobrachys guangxiensis (Chinese earth tiger tarantula).